The following is an 81-amino-acid chain: UPF0349 protein SE_0633 (81 aa).

This sequence belongs to the UPF0349 family.

The chain is UPF0349 protein SE_0633 from Staphylococcus epidermidis (strain ATCC 12228 / FDA PCI 1200).